A 356-amino-acid chain; its full sequence is Mannonate dehydratase (356 aa).

This sequence belongs to the mannonate dehydratase family. It depends on Fe(2+) as a cofactor. Mn(2+) is required as a cofactor.

The enzyme catalyses D-mannonate = 2-dehydro-3-deoxy-D-gluconate + H2O. Its pathway is carbohydrate metabolism; pentose and glucuronate interconversion. Its function is as follows. Catalyzes the dehydration of D-mannonate. This is Mannonate dehydratase from Levilactobacillus brevis (strain ATCC 367 / BCRC 12310 / CIP 105137 / JCM 1170 / LMG 11437 / NCIMB 947 / NCTC 947) (Lactobacillus brevis).